We begin with the raw amino-acid sequence, 424 residues long: Glutamate-1-semialdehyde 2,1-aminomutase (424 aa).

At K263 the chain carries N6-(pyridoxal phosphate)lysine.

It belongs to the class-III pyridoxal-phosphate-dependent aminotransferase family. HemL subfamily. Homodimer. The cofactor is pyridoxal 5'-phosphate.

It localises to the cytoplasm. The catalysed reaction is (S)-4-amino-5-oxopentanoate = 5-aminolevulinate. It participates in porphyrin-containing compound metabolism; protoporphyrin-IX biosynthesis; 5-aminolevulinate from L-glutamyl-tRNA(Glu): step 2/2. The polypeptide is Glutamate-1-semialdehyde 2,1-aminomutase (Campylobacter jejuni subsp. jejuni serotype O:6 (strain 81116 / NCTC 11828)).